Reading from the N-terminus, the 173-residue chain is Mesencephalic astrocyte-derived neurotrophic factor homolog (173 aa).

A signal peptide spans 1–22 (MNTSQIVLMFCLVVGVAQTALA). Cystine bridges form between Cys28-Cys114, Cys31-Cys103, Cys61-Cys72, and Cys148-Cys151.

This sequence belongs to the ARMET family.

It is found in the secreted. Required during the maturation of the embryonic nervous system for maintenance of neuronal and cuticular connectivity. Essential for maintenance of dopaminergic neurons and dopamine levels. This chain is Mesencephalic astrocyte-derived neurotrophic factor homolog, found in Drosophila grimshawi (Hawaiian fruit fly).